The primary structure comprises 104 residues: Large ribosomal subunit protein uL24 (104 aa).

The protein belongs to the universal ribosomal protein uL24 family. In terms of assembly, part of the 50S ribosomal subunit.

One of two assembly initiator proteins, it binds directly to the 5'-end of the 23S rRNA, where it nucleates assembly of the 50S subunit. In terms of biological role, one of the proteins that surrounds the polypeptide exit tunnel on the outside of the subunit. The chain is Large ribosomal subunit protein uL24 from Flavobacterium psychrophilum (strain ATCC 49511 / DSM 21280 / CIP 103535 / JIP02/86).